Consider the following 268-residue polypeptide: NH(3)-dependent NAD(+) synthetase (268 aa).

Residue 46–53 (GVSGGQDS) coordinates ATP. Position 52 (Asp52) interacts with Mg(2+). Arg140 provides a ligand contact to deamido-NAD(+). Thr160 lines the ATP pocket. Glu165 contributes to the Mg(2+) binding site. Deamido-NAD(+) is bound by residues Lys173 and Asp180. Lys189 is a binding site for ATP. Residue 260-261 (HK) coordinates deamido-NAD(+).

Belongs to the NAD synthetase family. In terms of assembly, homodimer.

The catalysed reaction is deamido-NAD(+) + NH4(+) + ATP = AMP + diphosphate + NAD(+) + H(+). Its pathway is cofactor biosynthesis; NAD(+) biosynthesis; NAD(+) from deamido-NAD(+) (ammonia route): step 1/1. In terms of biological role, catalyzes the ATP-dependent amidation of deamido-NAD to form NAD. Uses ammonia as a nitrogen source. The chain is NH(3)-dependent NAD(+) synthetase from Buchnera aphidicola subsp. Acyrthosiphon pisum (strain APS) (Acyrthosiphon pisum symbiotic bacterium).